Consider the following 224-residue polypeptide: MNIQFESAGVSFGARVALEPLTLAITGKRIGVIGLNGSGKTTFARLINGLTKPTTGRVIVNGRDTADEKTVVTDVGFIFQSPQNQIILPIVKDDIAFGLKRRGLSKAEIEARVEGVLARFGAEALADRRAHELSGGELQVAALCSVLATGPGILILDEPTNQLDLKNRALVERIIAGLPESAIVITHDLELIAGFERVLVFHEGRLAADEPAAEAIARYREIAA.

The region spanning 3–224 is the ABC transporter domain; the sequence is IQFESAGVSF…AIARYREIAA (222 aa). 34–41 contributes to the ATP binding site; it reads GLNGSGKT.

This sequence belongs to the ABC transporter superfamily. Part of a biotin transporter complex composed of BioM, BioN and BioY.

The protein resides in the cell inner membrane. Functionally, involved in biotin uptake. This Rhizobium etli (strain ATCC 51251 / DSM 11541 / JCM 21823 / NBRC 15573 / CFN 42) protein is Biotin transport ATP-binding protein BioM (bioM).